The primary structure comprises 432 residues: Adenylosuccinate synthetase (432 aa).

GTP-binding positions include G12–K18 and G40–T42. The active-site Proton acceptor is D13. 2 residues coordinate Mg(2+): D13 and G40. IMP contacts are provided by residues D13–K16, N38–H41, T129, R143, Q224, T239, and R303. H41 functions as the Proton donor in the catalytic mechanism. Position 299 to 305 (V299 to R305) interacts with substrate. GTP-binding positions include R305, K331–D333, and G413–G415.

Belongs to the adenylosuccinate synthetase family. Homodimer. The cofactor is Mg(2+).

It is found in the cytoplasm. It carries out the reaction IMP + L-aspartate + GTP = N(6)-(1,2-dicarboxyethyl)-AMP + GDP + phosphate + 2 H(+). Its pathway is purine metabolism; AMP biosynthesis via de novo pathway; AMP from IMP: step 1/2. Its function is as follows. Plays an important role in the de novo pathway of purine nucleotide biosynthesis. Catalyzes the first committed step in the biosynthesis of AMP from IMP. The protein is Adenylosuccinate synthetase of Mycobacterium marinum (strain ATCC BAA-535 / M).